The following is a 500-amino-acid chain: ATP synthase subunit alpha (500 aa).

Residue 168–175 participates in ATP binding; sequence GDRQTGKT.

This sequence belongs to the ATPase alpha/beta chains family. As to quaternary structure, F-type ATPases have 2 components, CF(1) - the catalytic core - and CF(0) - the membrane proton channel. CF(1) has five subunits: alpha(3), beta(3), gamma(1), delta(1), epsilon(1). CF(0) has three main subunits: a(1), b(2) and c(9-12). The alpha and beta chains form an alternating ring which encloses part of the gamma chain. CF(1) is attached to CF(0) by a central stalk formed by the gamma and epsilon chains, while a peripheral stalk is formed by the delta and b chains.

It localises to the cell membrane. The catalysed reaction is ATP + H2O + 4 H(+)(in) = ADP + phosphate + 5 H(+)(out). In terms of biological role, produces ATP from ADP in the presence of a proton gradient across the membrane. The alpha chain is a regulatory subunit. The polypeptide is ATP synthase subunit alpha (Streptococcus suis (strain 98HAH33)).